Reading from the N-terminus, the 156-residue chain is MRNSTKQEDLVKAFKALLKEEKFSSQSEIVHALQDEGFENINQSKVSRMLTKFGAVRTRNAKMEMVYCLPAELGVPTTSSPLKNLVLDVDYNDAVVVIHTSPGAAQLIARLLDSLGKSEGILGTIAGDDTIFTTPARGFSVKQLYEAILVLFEQEL.

This sequence belongs to the ArgR family.

The protein resides in the cytoplasm. It participates in amino-acid biosynthesis; L-arginine biosynthesis [regulation]. In terms of biological role, regulates arginine biosynthesis genes. The polypeptide is Arginine repressor (Pectobacterium atrosepticum (strain SCRI 1043 / ATCC BAA-672) (Erwinia carotovora subsp. atroseptica)).